Reading from the N-terminus, the 173-residue chain is MEVILIKPVRKLGKIGEIHKVADGFGRNYLLPQKLAIRATELNKELIVKQKHELEEKDKQIKSEITKINDLIKDQKLIFVRQTSDDGKLFGSVNNKEIAKKLSQAVSYPISHLNIILDTQIKSTGIYKVEVRLHAELSTEVTVIVARSESEIQDYLREQKTEKSTTEPLAESA.

This sequence belongs to the bacterial ribosomal protein bL9 family.

In terms of biological role, binds to the 23S rRNA. This chain is Large ribosomal subunit protein bL9, found in Rickettsia bellii (strain OSU 85-389).